The following is a 496-amino-acid chain: Maturase K (496 aa).

Belongs to the intron maturase 2 family. MatK subfamily.

Its subcellular location is the plastid. The protein resides in the chloroplast. In terms of biological role, usually encoded in the trnK tRNA gene intron. Probably assists in splicing its own and other chloroplast group II introns. The chain is Maturase K from Paeonia officinalis (Common peony).